A 60-amino-acid chain; its full sequence is Large ribosomal subunit protein uL30 (60 aa).

It belongs to the universal ribosomal protein uL30 family. In terms of assembly, part of the 50S ribosomal subunit.

The protein is Large ribosomal subunit protein uL30 of Amoebophilus asiaticus (strain 5a2).